The chain runs to 214 residues: Small ribosomal subunit protein uS5 (214 aa).

The S5 DRBM domain maps to 54–117; that stretch reads LRYDIVDIGI…RDAKMRIIPV (64 aa).

It belongs to the universal ribosomal protein uS5 family. As to quaternary structure, part of the 30S ribosomal subunit. Contacts protein S4.

With S4 and S12 plays an important role in translational accuracy. In Sulfolobus acidocaldarius (strain ATCC 33909 / DSM 639 / JCM 8929 / NBRC 15157 / NCIMB 11770), this protein is Small ribosomal subunit protein uS5.